The following is a 147-amino-acid chain: Large ribosomal subunit protein uL15 (147 aa).

Residues 1 to 15 show a composition bias toward basic and acidic residues; the sequence is MKLHELKPAKGAVKE. The segment at 1-47 is disordered; it reads MKLHELKPAKGAVKEVKRKGRGRATGNGKTAGRGHNGQNSRSGGGVR. Residues 23 to 35 are compositionally biased toward gly residues; the sequence is RATGNGKTAGRGH.

It belongs to the universal ribosomal protein uL15 family. In terms of assembly, part of the 50S ribosomal subunit.

Functionally, binds to the 23S rRNA. This Alkaliphilus metalliredigens (strain QYMF) protein is Large ribosomal subunit protein uL15.